The primary structure comprises 326 residues: tRNA uridine(34) hydroxylase (326 aa).

The region spanning 123–217 is the Rhodanese domain; that stretch reads ADPEVFVVDT…YLEEVPQEES (95 aa). Cys177 (cysteine persulfide intermediate) is an active-site residue. Basic and acidic residues predominate over residues 278–288; sequence QVERFREREKQ. The disordered stretch occupies residues 278-326; the sequence is QVERFREREKQVSLANQRGEQHVGGESAKQRAQRREAKLAKKAAQRKQA. Positions 317–326 are enriched in basic residues; the sequence is AKKAAQRKQA.

It belongs to the TrhO family.

It carries out the reaction uridine(34) in tRNA + AH2 + O2 = 5-hydroxyuridine(34) in tRNA + A + H2O. Its function is as follows. Catalyzes oxygen-dependent 5-hydroxyuridine (ho5U) modification at position 34 in tRNAs. This Vibrio parahaemolyticus serotype O3:K6 (strain RIMD 2210633) protein is tRNA uridine(34) hydroxylase.